A 396-amino-acid chain; its full sequence is MSKEKFERKKPHINVGTIGHVDHGKTTLTAALTKVLAEAHGGDARAFDQIDNAPEERARGITIATAHVEYESESRHYAHVDCPGHADYVKNMITGAAQMDGSILVVSAADGPMPQTREHILLARQVGVPAIVVFLNKADMVDDAELLELVEMEVRELLSDYDFDGDNIPVVTGSALKALEGDDSEMGRPAIIKLVEAMDAHIPQPERPVDGDFLMPIEDVFSISGRGTVVTGRVERGVIKVGEEVEIVGITDTRKTTCTGVEMFRKLLDQGEAGDNIGALLRGIKRDDVERGQVLCKPKSITPHTHFEAEVYVLSKDEGGRHTPFFNGYRPQFYFRTTDVTGTVTLPEGTEMVMPGDNVKMTVQLIAPIAMEDGLRFAIREGGRTVGAGVVSKILD.

Positions 10 to 206 (KPHINVGTIG…AMDAHIPQPE (197 aa)) constitute a tr-type G domain. Residues 19-26 (GHVDHGKT) form a G1 region. 19–26 (GHVDHGKT) contacts GTP. A Mg(2+)-binding site is contributed by Thr-26. The G2 stretch occupies residues 60–64 (GITIA). The segment at 81–84 (DCPG) is G3. GTP-binding positions include 81 to 85 (DCPGH) and 136 to 139 (NKAD). The tract at residues 136 to 139 (NKAD) is G4. Residues 174–176 (SAL) are G5.

Belongs to the TRAFAC class translation factor GTPase superfamily. Classic translation factor GTPase family. EF-Tu/EF-1A subfamily. Monomer.

Its subcellular location is the cytoplasm. It carries out the reaction GTP + H2O = GDP + phosphate + H(+). In terms of biological role, GTP hydrolase that promotes the GTP-dependent binding of aminoacyl-tRNA to the A-site of ribosomes during protein biosynthesis. The sequence is that of Elongation factor Tu 2 from Halorhodospira halophila (strain DSM 244 / SL1) (Ectothiorhodospira halophila (strain DSM 244 / SL1)).